The sequence spans 331 residues: Adenosine deaminase (331 aa).

Residues His-12 and His-14 each contribute to the Zn(2+) site. Substrate-binding residues include His-14, Asp-16, and Gly-170. His-197 is a Zn(2+) binding site. Glu-200 functions as the Proton donor in the catalytic mechanism. Asp-278 contacts Zn(2+).

This sequence belongs to the metallo-dependent hydrolases superfamily. Adenosine and AMP deaminases family. Adenosine deaminase subfamily. Requires Zn(2+) as cofactor.

It carries out the reaction adenosine + H2O + H(+) = inosine + NH4(+). The enzyme catalyses 2'-deoxyadenosine + H2O + H(+) = 2'-deoxyinosine + NH4(+). Its function is as follows. Catalyzes the hydrolytic deamination of adenosine and 2-deoxyadenosine. In Clostridium botulinum (strain 657 / Type Ba4), this protein is Adenosine deaminase.